We begin with the raw amino-acid sequence, 98 residues long: NADH-ubiquinone oxidoreductase chain 4L (98 aa).

Helical transmembrane passes span 1–21 (MSVV…GLLV), 30–50 (LLCL…TVLT), and 61–81 (IILL…LVMI).

It belongs to the complex I subunit 4L family. Core subunit of respiratory chain NADH dehydrogenase (Complex I) which is composed of 45 different subunits.

The protein resides in the mitochondrion inner membrane. It carries out the reaction a ubiquinone + NADH + 5 H(+)(in) = a ubiquinol + NAD(+) + 4 H(+)(out). In terms of biological role, core subunit of the mitochondrial membrane respiratory chain NADH dehydrogenase (Complex I) which catalyzes electron transfer from NADH through the respiratory chain, using ubiquinone as an electron acceptor. Part of the enzyme membrane arm which is embedded in the lipid bilayer and involved in proton translocation. This Lontra canadensis (North American river otter) protein is NADH-ubiquinone oxidoreductase chain 4L (MT-ND4L).